The chain runs to 345 residues: Anthranilate phosphoribosyltransferase (345 aa).

Residues Gly80, 83–84, Thr88, 90–93, 108–116, and Ser120 contribute to the 5-phospho-alpha-D-ribose 1-diphosphate site; these read GD, NIST, and KHGNRSVTS. Gly80 provides a ligand contact to anthranilate. Ser92 lines the Mg(2+) pocket. Asn111 is an anthranilate binding site. Arg166 is an anthranilate binding site. Mg(2+)-binding residues include Asp229 and Glu230.

The protein belongs to the anthranilate phosphoribosyltransferase family. In terms of assembly, homodimer. Mg(2+) serves as cofactor.

It carries out the reaction N-(5-phospho-beta-D-ribosyl)anthranilate + diphosphate = 5-phospho-alpha-D-ribose 1-diphosphate + anthranilate. Its pathway is amino-acid biosynthesis; L-tryptophan biosynthesis; L-tryptophan from chorismate: step 2/5. Functionally, catalyzes the transfer of the phosphoribosyl group of 5-phosphorylribose-1-pyrophosphate (PRPP) to anthranilate to yield N-(5'-phosphoribosyl)-anthranilate (PRA). This Chlorobium phaeobacteroides (strain BS1) protein is Anthranilate phosphoribosyltransferase.